Here is a 211-residue protein sequence, read N- to C-terminus: Uracil phosphoribosyltransferase (211 aa).

5-phospho-alpha-D-ribose 1-diphosphate contacts are provided by residues Arg78, Arg103, and 130–138 (DPMLATGGT). Residues Ile195 and 200 to 202 (GDA) each bind uracil. Asp201 is a 5-phospho-alpha-D-ribose 1-diphosphate binding site.

The protein belongs to the UPRTase family. The cofactor is Mg(2+).

The catalysed reaction is UMP + diphosphate = 5-phospho-alpha-D-ribose 1-diphosphate + uracil. It functions in the pathway pyrimidine metabolism; UMP biosynthesis via salvage pathway; UMP from uracil: step 1/1. Its activity is regulated as follows. Allosterically activated by GTP. In terms of biological role, catalyzes the conversion of uracil and 5-phospho-alpha-D-ribose 1-diphosphate (PRPP) to UMP and diphosphate. This chain is Uracil phosphoribosyltransferase, found in Paenarthrobacter aurescens (strain TC1).